We begin with the raw amino-acid sequence, 156 residues long: Ribosomal RNA large subunit methyltransferase H (156 aa).

S-adenosyl-L-methionine contacts are provided by residues Leu-73, Gly-104, and 123–128; that span reads LSALTL.

This sequence belongs to the RNA methyltransferase RlmH family. Homodimer.

The protein localises to the cytoplasm. It carries out the reaction pseudouridine(1915) in 23S rRNA + S-adenosyl-L-methionine = N(3)-methylpseudouridine(1915) in 23S rRNA + S-adenosyl-L-homocysteine + H(+). Functionally, specifically methylates the pseudouridine at position 1915 (m3Psi1915) in 23S rRNA. This Shewanella loihica (strain ATCC BAA-1088 / PV-4) protein is Ribosomal RNA large subunit methyltransferase H.